Here is a 745-residue protein sequence, read N- to C-terminus: Junction plakoglobin (745 aa).

At Met1 the chain carries N-acetylmethionine. The O-linked (GlcNAc) threonine glycan is linked to Thr14. A phosphoserine mark is found at Ser99 and Ser125. ARM repeat units lie at residues 132 to 171 (NYQDDAELATRALPELTKLLNDEDPVVVTKAAMIVNQLSK), 172 to 215 (KEAS…LSHH), 216 to 255 (REGLLAIFKSGGIPALVRMLSSPVESVLFYAITTLHNLLL), 258 to 297 (EGAKMAVRLADGLQKMVPLLNKNNPKFLAITTDCLQLLAY), 298 to 341 (GNQE…LSVC), 342 to 381 (PSNKPAIVEAGGMQALGKHLTSNSPRLVQNCLWTLRNLSD), 383 to 420 (ATKQEGLESVLKILVNQLSVDDVNVLTCATGTLSNLTC), 423 to 464 (SKNK…HLTS), 470 to 510 (EMAQ…NLAL), 512 to 551 (PANHAPLQEASVIPRLVQLLVKAHQDAQRHVAAGTQQPYT), 574 to 613 (PMNRMEIFRLNTIPLFVQLLYSSVENIQRVAAGVLCELAQ), and 615 to 661 (KEAA…PDYR). Positions 132-297 (NYQDDAELAT…TTDCLQLLAY (166 aa)) are interaction with DSC1 and DSG1. Ser182 is subject to Phosphoserine. The segment at 574 to 661 (PMNRMEIFRL…ISEDKNPDYR (88 aa)) is interaction with DSC1. Phosphoserine is present on residues Ser665 and Ser730.

The protein belongs to the beta-catenin family. Homodimer. Component of an E-cadherin/catenin adhesion complex composed of at least E-cadherin/CDH1 and gamma-catenin/JUP, and possibly alpha-catenin/CTNNA1; the complex is located to adherens junctions. The stable association of CTNNA1 is controversial as CTNNA1 was shown not to bind to F-actin when assembled in the complex. Interacts with MUC1. Interacts with CAV1. Interacts with PTPRJ. Interacts with DSG1. Interacts with DSC1 and DSC2. Interacts with PKP2. Interacts with PKP3 (via N-terminus); the interaction is required for PKP3 localization to desmosome cell-cell junctions. Interacts with DSG4. Post-translationally, may be phosphorylated by FER.

It localises to the cell junction. It is found in the adherens junction. Its subcellular location is the desmosome. The protein localises to the cytoplasm. The protein resides in the cytoskeleton. It localises to the cell membrane. It is found in the nucleus. Common junctional plaque protein. The membrane-associated plaques are architectural elements in an important strategic position to influence the arrangement and function of both the cytoskeleton and the cells within the tissue. The presence of plakoglobin in both the desmosomes and in the intermediate junctions suggests that it plays a central role in the structure and function of submembranous plaques. Acts as a substrate for VE-PTP and is required by it to stimulate VE-cadherin function in endothelial cells. Can replace beta-catenin in E-cadherin/catenin adhesion complexes which are proposed to couple cadherins to the actin cytoskeleton. This Sus scrofa (Pig) protein is Junction plakoglobin.